The following is a 148-amino-acid chain: MPSSTFSGTVSTPKLSVAVDMGNPFLNLTVDAFLKIGAVGVTKSLAEDTYKAIDKGSLSKSTLEHALKKLCKEGVYWGAAGGVYIGTEYGIERIRGSRDWKNAMLAGAATGAVLSAVGKKGKDTIVIDAILGGALATASQFVNNHYFY.

The interval 2 to 73 (PSSTFSGTVS…EHALKKLCKE (72 aa)) is contains 4 beta strands. 3 helical membrane passes run 75–91 (VYWGAAGGVYIGTEYGI), 102–118 (NAMLAGAATGAVLSAVG), and 125–142 (IVIDAILGGALATASQFV).

This sequence belongs to the Tim17/Tim22/Tim23 family. Plastid outer envelope porin OEP16 (TC 1.B.30) subfamily. In terms of assembly, homodimer and oligomers in membrane. Forms large complexes including TOC33, pPORA and OEP161 during pPORA import into plastids at the plastid envelope membrane. In terms of tissue distribution, expressed predominantly in leaves and cotyledons.

It is found in the plastid. Its subcellular location is the chloroplast outer membrane. The protein resides in the etioplast membrane. Stimulated by GTP. Functionally, voltage-dependent high-conductance channel with a slight cation-selectivity; selective for amino acids but excludes triosephosphates or uncharged sugars. Non-essential amino acid-selective channel protein and translocation pore for NADPH:protochlorophyllide oxidoreductase A (PORA) and possibly PORB. Involved in PORA precursor (pPORA) import and thus confers photoprotection onto etiolated seedlings during greening. The protein is Outer envelope pore protein 16-1, chloroplastic (OEP161) of Arabidopsis thaliana (Mouse-ear cress).